The chain runs to 640 residues: Envelope glycoprotein (640 aa).

Residues 1–32 (MEGPAFSKPLKDKINPWGPLIILGILIRAGVS) form the signal peptide. At 33–582 (VQHDSPHQVF…FNKSPWFTTL (550 aa)) the chain is on the extracellular side. Residues N43 and N58 are each glycosylated (N-linked (GlcNAc...) asparagine; by host). Disulfide bonds link C109-C126 and C118-C131. N297 carries N-linked (GlcNAc...) asparagine; by host glycosylation. 6 cysteine pairs are disulfide-bonded: C307–C310, C307–C535, C337–C391, C356–C368, C398–C411, and C527–C534. The CXXC motif lies at 307–310 (CWLC). 2 N-linked (GlcNAc...) asparagine; by host glycosylation sites follow: N329 and N336. An N-linked (GlcNAc...) asparagine; by host glycan is attached at N369. The interval 444–464 (VSLTLALLLGGLTMGGIAAGV) is fusion peptide. Residues 473–509 (ATQQFQQLQAAMHDDLKEVEKSITNLEKSLTSLSEVV) adopt a coiled-coil conformation. Positions 510–526 (LQNRRGLDLLFLKEGGL) are immunosuppression. The short motif at 527–535 (CAALKEECC) is the CX6CC element. A helical transmembrane segment spans residues 583 to 603 (ISTIMGPLIILLLILLFGPWI). Over 604-640 (LNRLVQFIKDRISVVQALVLTQQYHQLKTIGDCKSRE) the chain is Cytoplasmic. A YXXL motif; contains endocytosis signal motif is present at residues 627 to 630 (YHQL).

As to quaternary structure, the mature envelope protein (Env) consists of a trimer of SU-TM heterodimers attached by a labile interchain disulfide bond. In terms of processing, specific enzymatic cleavages in vivo yield mature proteins. Envelope glycoproteins are synthesized as an inactive precursor that is N-glycosylated and processed likely by host cell furin or by a furin-like protease in the Golgi to yield the mature SU and TM proteins. The cleavage site between SU and TM requires the minimal sequence [KR]-X-[KR]-R. The R-peptide is released from the C-terminus of the cytoplasmic tail of the TM protein upon particle formation as a result of proteolytic cleavage by the viral protease. Cleavage of this peptide is required for TM to become fusogenic. The CXXC motif is highly conserved across a broad range of retroviral envelope proteins. It is thought to participate in the formation of a labile disulfide bond possibly with the CX6CC motif present in the transmembrane protein. Isomerization of the intersubunit disulfide bond to an SU intrachain disulfide bond is thought to occur upon receptor recognition in order to allow membrane fusion. Post-translationally, the R-peptide is palmitoylated.

It localises to the virion membrane. The protein resides in the host cell membrane. In terms of biological role, the surface protein (SU) attaches the virus to the host cell by binding to its receptor. This interaction triggers the refolding of the transmembrane protein (TM) and is thought to activate its fusogenic potential by unmasking its fusion peptide. Fusion occurs at the host cell plasma membrane. The transmembrane protein (TM) acts as a class I viral fusion protein. Under the current model, the protein has at least 3 conformational states: pre-fusion native state, pre-hairpin intermediate state, and post-fusion hairpin state. During viral and target cell membrane fusion, the coiled coil regions (heptad repeats) assume a trimer-of-hairpins structure, positioning the fusion peptide in close proximity to the C-terminal region of the ectodomain. The formation of this structure appears to drive apposition and subsequent fusion of viral and target cell membranes. Membranes fusion leads to delivery of the nucleocapsid into the cytoplasm. The chain is Envelope glycoprotein (env) from Mus musculus (Mouse).